A 392-amino-acid polypeptide reads, in one-letter code: 8-amino-7-oxononanoate synthase (392 aa).

Residue 108–109 coordinates pyridoxal 5'-phosphate; sequence GF. Substrate is bound at residue His-133. Pyridoxal 5'-phosphate is bound by residues Ser-180, 205–208, and 236–239; these read DDAH and TLSK. Lys-239 carries the N6-(pyridoxal phosphate)lysine modification. Thr-353 serves as a coordination point for substrate.

The protein belongs to the class-II pyridoxal-phosphate-dependent aminotransferase family. BioF subfamily. In terms of assembly, homodimer. The cofactor is pyridoxal 5'-phosphate.

It catalyses the reaction 6-carboxyhexanoyl-[ACP] + L-alanine + H(+) = (8S)-8-amino-7-oxononanoate + holo-[ACP] + CO2. It participates in cofactor biosynthesis; biotin biosynthesis. Catalyzes the decarboxylative condensation of pimeloyl-[acyl-carrier protein] and L-alanine to produce 8-amino-7-oxononanoate (AON), [acyl-carrier protein], and carbon dioxide. The protein is 8-amino-7-oxononanoate synthase of Bacillus pumilus (strain SAFR-032).